The primary structure comprises 341 residues: L-threonine 3-dehydrogenase (341 aa).

Cys-38 is a Zn(2+) binding site. Residues Thr-40 and His-43 each act as charge relay system in the active site. 6 residues coordinate Zn(2+): His-63, Glu-64, Cys-93, Cys-96, Cys-99, and Cys-107. Residues Ile-175, Asp-195, Arg-200, 262–264 (LGI), and 286–287 (IY) each bind NAD(+).

The protein belongs to the zinc-containing alcohol dehydrogenase family. In terms of assembly, homotetramer. It depends on Zn(2+) as a cofactor.

It localises to the cytoplasm. The catalysed reaction is L-threonine + NAD(+) = (2S)-2-amino-3-oxobutanoate + NADH + H(+). Its pathway is amino-acid degradation; L-threonine degradation via oxydo-reductase pathway; glycine from L-threonine: step 1/2. Catalyzes the NAD(+)-dependent oxidation of L-threonine to 2-amino-3-ketobutyrate. This chain is L-threonine 3-dehydrogenase, found in Idiomarina loihiensis (strain ATCC BAA-735 / DSM 15497 / L2-TR).